The chain runs to 493 residues: Serine/threonine-protein kinase 3 (493 aa).

Residues 26–277 (FDVLEKLGEG…ATQLLQHPFI (252 aa)) form the Protein kinase domain. ATP is bound by residues 32–40 (LGEGSYGSV) and K55. D145 serves as the catalytic Proton acceptor. T179 is modified (phosphothreonine; by autocatalysis). A coiled-coil region spans residues 286–327 (LRDLITEAMDIKAKRHEELQRELEEEDENSEEDELDSHTMVK). Disordered stretches follow at residues 303 to 336 (ELQRELEEEDENSEEDELDSHTMVKTNSESAGTM) and 369 to 414 (DDEE…NCNQ). Positions 308 to 320 (LEEEDENSEEDEL) are enriched in acidic residues. Residues 325 to 336 (MVKTNSESAGTM) are compositionally biased toward polar residues. A compositionally biased stretch (acidic residues) spans 369–378 (DDEEEEEEED). A compositionally biased stretch (basic and acidic residues) spans 398-410 (YFDKQDSKNKPHD). The region spanning 439 to 486 (FDFLKNLSFEELQMRLKALDPMMEREIEDLRQRYNAKRQPILDAMDAK) is the SARAH domain. The stretch at 444–477 (NLSFEELQMRLKALDPMMEREIEDLRQRYNAKRQ) forms a coiled coil.

Belongs to the protein kinase superfamily. STE Ser/Thr protein kinase family. STE20 subfamily. As to quaternary structure, homodimer; mediated via the coiled-coil region. Mg(2+) serves as cofactor.

It is found in the cytoplasm. It localises to the nucleus. It catalyses the reaction L-seryl-[protein] + ATP = O-phospho-L-seryl-[protein] + ADP + H(+). The catalysed reaction is L-threonyl-[protein] + ATP = O-phospho-L-threonyl-[protein] + ADP + H(+). Its activity is regulated as follows. Inhibited by the C-terminal non-catalytic region. Activated by caspase-cleavage. Full activation also requires homodimerization and autophosphorylation of Thr-179. Its function is as follows. Stress-activated, pro-apoptotic kinase which, following caspase-cleavage, enters the nucleus and induces chromatin condensation followed by internucleosomal DNA fragmentation. Key component of the Hippo signaling pathway which plays a pivotal role in organ size control and tumor suppression by restricting proliferation and promoting apoptosis. The core of this pathway is composed of a kinase cascade wherein stk3/mst2 and stk4/mst1, in complex with its regulatory protein sav1, phosphorylates and activates lats1/2 in complex with its regulatory protein mob1, which in turn phosphorylates and inactivates yap1 oncoprotein and wwtr1/taz. Phosphorylation of yap1 by lats2 inhibits its translocation into the nucleus to regulate cellular genes important for cell proliferation, cell death, and cell migration. In Xenopus laevis (African clawed frog), this protein is Serine/threonine-protein kinase 3 (stk3).